A 224-amino-acid chain; its full sequence is Ion-translocating oxidoreductase complex subunit E (224 aa).

5 helical membrane passes run 51–71, 81–101, 105–125, 140–160, and 194–214; these read LGLG…VSLF, IPIY…LMNA, SLYQ…IVIG, MFDG…LGAI, and HFLL…ILAI.

It belongs to the NqrDE/RnfAE family. In terms of assembly, the complex is composed of six subunits: RnfA, RnfB, RnfC, RnfD, RnfE and RnfG.

It is found in the cell inner membrane. In terms of biological role, part of a membrane-bound complex that couples electron transfer with translocation of ions across the membrane. This is Ion-translocating oxidoreductase complex subunit E from Pasteurella multocida (strain Pm70).